Reading from the N-terminus, the 131-residue chain is Global transcriptional regulator Spx 1 (131 aa).

The cysteines at positions 10 and 13 are disulfide-linked.

This sequence belongs to the ArsC family. Spx subfamily. As to quaternary structure, interacts with the C-terminal domain of the alpha subunit of the RNAP.

It localises to the cytoplasm. Its function is as follows. Global transcriptional regulator that plays a key role in stress response and exerts either positive or negative regulation of genes. Acts by interacting with the C-terminal domain of the alpha subunit of the RNA polymerase (RNAP). This interaction can enhance binding of RNAP to the promoter region of target genes and stimulate their transcription, or block interaction of RNAP with activator. The polypeptide is Global transcriptional regulator Spx 1 (Bacillus anthracis).